The following is a 175-amino-acid chain: ATP-dependent protease subunit HslV (175 aa).

Threonine 2 is a catalytic residue. Positions 157, 160, and 163 each coordinate Na(+).

Belongs to the peptidase T1B family. HslV subfamily. As to quaternary structure, a double ring-shaped homohexamer of HslV is capped on each side by a ring-shaped HslU homohexamer. The assembly of the HslU/HslV complex is dependent on binding of ATP.

It localises to the cytoplasm. The catalysed reaction is ATP-dependent cleavage of peptide bonds with broad specificity.. Allosterically activated by HslU binding. Its function is as follows. Protease subunit of a proteasome-like degradation complex believed to be a general protein degrading machinery. The chain is ATP-dependent protease subunit HslV from Photobacterium profundum (strain SS9).